The chain runs to 151 residues: Putative esterase VNG_1336C (151 aa).

This sequence belongs to the thioesterase PaaI family.

The chain is Putative esterase VNG_1336C from Halobacterium salinarum (strain ATCC 700922 / JCM 11081 / NRC-1) (Halobacterium halobium).